The following is a 72-amino-acid chain: MSKEDVIEVEGVIKEALPNATFQVELENGHVVLAHLSGKLRMHFIRILPGDKVTVELSPYDLTRGRITWRKK.

Residues 1 to 72 (MSKEDVIEVE…TRGRITWRKK (72 aa)) form the S1-like domain.

It belongs to the IF-1 family. In terms of assembly, component of the 30S ribosomal translation pre-initiation complex which assembles on the 30S ribosome in the order IF-2 and IF-3, IF-1 and N-formylmethionyl-tRNA(fMet); mRNA recruitment can occur at any time during PIC assembly.

It is found in the cytoplasm. In terms of biological role, one of the essential components for the initiation of protein synthesis. Stabilizes the binding of IF-2 and IF-3 on the 30S subunit to which N-formylmethionyl-tRNA(fMet) subsequently binds. Helps modulate mRNA selection, yielding the 30S pre-initiation complex (PIC). Upon addition of the 50S ribosomal subunit IF-1, IF-2 and IF-3 are released leaving the mature 70S translation initiation complex. The polypeptide is Translation initiation factor IF-1 (Alkaliphilus metalliredigens (strain QYMF)).